A 122-amino-acid polypeptide reads, in one-letter code: Small ribosomal subunit protein uS13 (122 aa).

Residues 95–122 (GLPVRGQRTKTNARTRKGPKKTIAGKKK) are disordered.

It belongs to the universal ribosomal protein uS13 family. In terms of assembly, part of the 30S ribosomal subunit. Forms a loose heterodimer with protein S19. Forms two bridges to the 50S subunit in the 70S ribosome.

Functionally, located at the top of the head of the 30S subunit, it contacts several helices of the 16S rRNA. In the 70S ribosome it contacts the 23S rRNA (bridge B1a) and protein L5 of the 50S subunit (bridge B1b), connecting the 2 subunits; these bridges are implicated in subunit movement. Contacts the tRNAs in the A and P-sites. The protein is Small ribosomal subunit protein uS13 of Corynebacterium diphtheriae (strain ATCC 700971 / NCTC 13129 / Biotype gravis).